Reading from the N-terminus, the 359-residue chain is Pyruvate dehydrogenase E1 component subunit beta, mitochondrial (359 aa).

A mitochondrion-targeting transit peptide spans 1 to 30 (MAVVAVLVRKPLEQVSGLLRRRFHRTAPAA). At Tyr-67 the chain carries Phosphotyrosine. Glu-89 is a binding site for thiamine diphosphate. 5 residues coordinate K(+): Ile-142, Ala-190, Ile-191, Asp-193, and Asn-195. Lys-354 is subject to N6-acetyllysine.

As to quaternary structure, heterotetramer of two PDHA1 and two PDHB subunits. The heterotetramer interacts with DLAT, and is part of the multimeric pyruvate dehydrogenase complex that contains multiple copies of pyruvate dehydrogenase (E1), dihydrolipoamide acetyltransferase (DLAT, E2) and lipoamide dehydrogenase (DLD, E3). These subunits are bound to an inner core composed of about 48 DLAT and 12 PDHX molecules. Interacts with DLAT. Thiamine diphosphate serves as cofactor.

It is found in the mitochondrion matrix. The catalysed reaction is N(6)-[(R)-lipoyl]-L-lysyl-[protein] + pyruvate + H(+) = N(6)-[(R)-S(8)-acetyldihydrolipoyl]-L-lysyl-[protein] + CO2. In terms of biological role, the pyruvate dehydrogenase complex catalyzes the overall conversion of pyruvate to acetyl-CoA and CO(2), and thereby links the glycolytic pathway to the tricarboxylic cycle. The polypeptide is Pyruvate dehydrogenase E1 component subunit beta, mitochondrial (PDHB) (Bos taurus (Bovine)).